Reading from the N-terminus, the 96-residue chain is Transcription and mRNA export factor SUS1 (96 aa).

Lys68 is covalently cross-linked (Glycyl lysine isopeptide (Lys-Gly) (interchain with G-Cter in ubiquitin)).

This sequence belongs to the ENY2 family. Component of the nuclear pore complex (NPC)-associated TREX-2 complex (transcription and export complex 2), composed of at least SUS1, SAC3, THP1, SEM1, and CDC31. TREX-2 contains 2 SUS1 chains. The TREX-2 complex interacts with the nucleoporin NUP1. Component of the 1.8 MDa SAGA transcription coactivator-HAT complex. SAGA is built of 5 distinct domains with specialized functions. Within the SAGA complex, SUS1, SGF11, SGF73 and UBP8 form an additional subcomplex of SAGA called the DUB module (deubiquitination module). Interacts directly with THP1, SAC3, SGF11, and with the RNA polymerase II.

It is found in the nucleus. It localises to the nucleoplasm. The protein resides in the cytoplasm. The protein localises to the P-body. In terms of biological role, involved in mRNA export coupled transcription activation by association with both the TREX-2 and the SAGA complexes. At the promoters, SAGA is required for recruitment of the basal transcription machinery. It influences RNA polymerase II transcriptional activity through different activities such as TBP interaction and promoter selectivity, interaction with transcription activators, and chromatin modification through histone acetylation and deubiquitination. Within the SAGA complex, participates in a subcomplex required for deubiquitination of H2B and for the maintenance of steady-state H3 methylation levels. The TREX-2 complex functions in docking export-competent ribonucleoprotein particles (mRNPs) to the nuclear entrance of the nuclear pore complex (nuclear basket). TREX-2 participates in mRNA export and accurate chromatin positioning in the nucleus by tethering genes to the nuclear periphery. May also be involved in cytoplasmic mRNA decay by interaction with components of P-bodies. The chain is Transcription and mRNA export factor SUS1 from Saccharomyces cerevisiae (strain RM11-1a) (Baker's yeast).